The sequence spans 265 residues: RNA-binding protein 7 (265 aa).

G2 is modified (N-acetylglycine). The 78-residue stretch at 10–87 folds into the RRM domain; sequence RTLFVGNLET…RPIKIQFRSG (78 aa). 2 ZCCHC8 binding regions span residues 25 to 35 and 59 to 76; these read LLFELFHQAGP and HEVS…IKLF. The segment at 91–125 is disordered; it reads ASQDASVSYPQHHVGNLSPTSTSPNSYERTVGNVS. Residues 107 to 125 show a composition bias toward polar residues; sequence LSPTSTSPNSYERTVGNVS. Position 136 is a phosphoserine; by MAPKAPK2 (S136). S137 carries the phosphoserine modification. Omega-N-methylarginine is present on R152. Disordered stretches follow at residues 166–224 and 237–265; these read DQLG…HGSD and DDRN…SSRH. The span at 170–196 shows a compositional bias: polar residues; that stretch reads FSPSAQPHGHTFNQSSSSQWRQDALSS. A Phosphoserine modification is found at S203. 2 stretches are compositionally biased toward basic and acidic residues: residues 207–224 and 237–256; these read LADR…HGSD and DDRN…DSSR.

As to quaternary structure, component of the nuclear exosome targeting (NEXT) complex composed of MTREX, ZCCHC8, and RBM7 that directs a subset of non-coding short-lived RNAs for exosomal degradation. Interacts with ZCCHC8 and SF3B2/SAP145. Binds to MTREX through ZCCHC8. Interacts with YWHAE and YWHAZ; these interactions are stress-dependent and RBM7 phosphorylation dependent; release RNA from the NEXT complex and may affect RNA targeting to the nuclear RNA exosomome for degradation. Interacts with MEPCE and LARP7, the core subunits of 7SK snRNP; upon genotoxic stress this interaction is enhanced, triggering the release of inactive P-TEFb complex from the core and P-TEFb complex activation. In terms of processing, phosphorylated at Ser-136 by MAPK14/p38-alpha-activated MAPKAPK2/MK2; this phosphorylation is stress-dependent; this phosphorylation decreases its RNA-binding capacity therefore affecting RNA nuclear exosome-mediated degradation. This phosphorylation mediates YWHAE and YWHAZ interactions.

The protein resides in the nucleus. Its subcellular location is the nucleoplasm. In terms of biological role, RNA-binding subunit of the trimeric nuclear exosome targeting (NEXT) complex, a complex that functions as an RNA exosome cofactor that directs a subset of non-coding short-lived RNAs for exosomal degradation. NEXT is involved in surveillance and turnover of aberrant transcripts and non-coding RNAs. Binds preferentially polyuridine sequences and associates with newly synthesized RNAs, including pre-mRNAs and short-lived exosome substrates such as promoter upstream transcripts (PROMPTs), enhancer RNAs (eRNAs), and 3'-extended products from small nuclear RNAs (snRNAs). Participates in several biological processes including DNA damage response (DDR) and stress response. During stress response, activation of the p38MAPK-MK2 pathway decreases RBM7-RNA-binding and subsequently the RNA exosome degradation activities, thereby modulating the turnover of non-coding transcriptome. Participates in DNA damage response (DDR), through its interaction with MEPCE and LARP7, the core subunits of 7SK snRNP complex, that release the positive transcription elongation factor b (P-TEFb) complex from the 7SK snRNP. In turn, activation of P-TEFb complex induces the transcription of P-TEFb-dependent DDR genes to promote cell viability. The protein is RNA-binding protein 7 of Mus musculus (Mouse).